We begin with the raw amino-acid sequence, 487 residues long: Cobyric acid synthase (487 aa).

Residues 249-435 (GIDIAIVRLP…IHGIFDEGDF (187 aa)) enclose the GATase cobBQ-type domain. Catalysis depends on C330, which acts as the Nucleophile. H427 is a catalytic residue.

Belongs to the CobB/CobQ family. CobQ subfamily.

Its pathway is cofactor biosynthesis; adenosylcobalamin biosynthesis. Functionally, catalyzes amidations at positions B, D, E, and G on adenosylcobyrinic A,C-diamide. NH(2) groups are provided by glutamine, and one molecule of ATP is hydrogenolyzed for each amidation. This chain is Cobyric acid synthase, found in Clostridium perfringens (strain SM101 / Type A).